The following is a 799-amino-acid chain: Cadherin-8 (799 aa).

The N-terminal stretch at 1 to 29 (MPERLAETLLDLWTPLIILWITLPSFVYM) is a signal peptide. Residues 30–61 (APMNQAHVLTTGSPLELSRQSEEMRILNRSKR) constitute a propeptide that is removed on maturation. Cadherin domains lie at 62-167 (GWVW…APEF), 168-276 (LNGP…PPKF), 277-391 (AQSL…PPVF), 392-494 (SSPT…DNAP), and 495-616 (EFAS…YVLP). Topologically, residues 62-621 (GWVWNQMFVL…PYVLPIGLSM (560 aa)) are extracellular. An N-linked (GlcNAc...) asparagine glycan is attached at Asn188. Asn463, Asn473, and Asn544 each carry an N-linked (GlcNAc...) asparagine glycan. Residues 622-642 (GALIAILACIILLLVIVVLFV) traverse the membrane as a helical segment. At 643–799 (TLRRHKNEPL…YSVGESDKET (157 aa)) the chain is on the cytoplasmic side. Ser795 carries the phosphoserine modification.

It localises to the cell membrane. Its function is as follows. Cadherins are calcium-dependent cell adhesion proteins. They preferentially interact with themselves in a homophilic manner in connecting cells; cadherins may thus contribute to the sorting of heterogeneous cell types. This is Cadherin-8 (Cdh8) from Rattus norvegicus (Rat).